Consider the following 128-residue polypeptide: Small ribosomal subunit protein bS6 (128 aa).

Positions 105 to 128 (AKVTEEEPVEAAPEAKVETTTEEE) are disordered. The span at 117–128 (PEAKVETTTEEE) shows a compositional bias: basic and acidic residues.

This sequence belongs to the bacterial ribosomal protein bS6 family.

Functionally, binds together with bS18 to 16S ribosomal RNA. This chain is Small ribosomal subunit protein bS6, found in Geotalea daltonii (strain DSM 22248 / JCM 15807 / FRC-32) (Geobacter daltonii).